An 85-amino-acid polypeptide reads, in one-letter code: Sec-independent protein translocase protein TatA (85 aa).

Residues 1–21 traverse the membrane as a helical segment; sequence MGGISIWQLLIIALIVVLLFG. The disordered stretch occupies residues 43–85; it reads MSSEEDKKALEDAEAAKPVQTAQTAQPTQQATEKKPESNKEQA. Over residues 46-57 the composition is skewed to basic and acidic residues; sequence EEDKKALEDAEA. A compositionally biased stretch (low complexity) spans 58-73; that stretch reads AKPVQTAQTAQPTQQA. The segment covering 74-85 has biased composition (basic and acidic residues); the sequence is TEKKPESNKEQA.

This sequence belongs to the TatA/E family. As to quaternary structure, the Tat system comprises two distinct complexes: a TatABC complex, containing multiple copies of TatA, TatB and TatC subunits, and a separate TatA complex, containing only TatA subunits. Substrates initially bind to the TatABC complex, which probably triggers association of the separate TatA complex to form the active translocon.

The protein localises to the cell inner membrane. Functionally, part of the twin-arginine translocation (Tat) system that transports large folded proteins containing a characteristic twin-arginine motif in their signal peptide across membranes. TatA could form the protein-conducting channel of the Tat system. The sequence is that of Sec-independent protein translocase protein TatA from Shewanella sp. (strain MR-4).